Consider the following 466-residue polypeptide: MTVASVEQMFSGKIQVGSEVTVRGWVRTRRDSKAGLSFVSVSDGSCFAAIQVVTPAHLPNYETEVRKLTTGCAVIVIGTLAPSLGQGQQFEIQAQSIEVVGWVEDPETYPIQPKQHSLEFLREVAHLRPRTNLFGAVARIRHCLSQAVHRFFHENGYYWITTPIITTSDAEGAGQMFRVSTLDLVNLPRTETGGIDFSHDFFGKETFLTVSGQLNVEAYALALSKVYTFGPTFRAENSHTPRHLAEFWMIEPEIAFADLAEDARVAEQFLKFLFKTVLEERDDDLAFITERVEKTTISKLEGFINSPFERIEYTDAIKLLERSGKKFDFPVEWGLDLQTEHERWLTEKHIGRPVVVTNYPEHIKAFYMRLNDDGKTVAAMDVLAPGIGEIIGGSQREERLEMLDIRMAQFGLDPAHYQWYRDFRRYGSVPHAGFGLGFERLVVYVCGLSNIRDAIPYPRAPGSAEF.

This sequence belongs to the class-II aminoacyl-tRNA synthetase family. In terms of assembly, homodimer.

The protein resides in the cytoplasm. The catalysed reaction is tRNA(Asn) + L-asparagine + ATP = L-asparaginyl-tRNA(Asn) + AMP + diphosphate + H(+). The sequence is that of Asparagine--tRNA ligase from Xylella fastidiosa (strain Temecula1 / ATCC 700964).